Consider the following 420-residue polypeptide: C-methyltransferase NovU (420 aa).

This sequence belongs to the methyltransferase superfamily.

It participates in antibiotic biosynthesis; novobiocin biosynthesis. Its function is as follows. C-methyltransferase that acts together with NovW to catalyze the formation of dTDP-4-keto-6-deoxy-5-C-methyl-L-lyxo-hexose from dTDP-4-keto-6-deoxy-D-glucose in the novobiocin biosynthesis pathway, an aminocoumarin family antibiotic that targets bacterial DNA gyrases. The chain is C-methyltransferase NovU (novU) from Streptomyces niveus (Streptomyces spheroides).